A 969-amino-acid chain; its full sequence is Alpha-glucosidase (969 aa).

The N-terminal stretch at 1–24 is a signal peptide; it reads MMISTAYQSLFLTALFSAISIAVG. N-linked (GlcNAc...) asparagine glycosylation is found at Asn37, Asn67, Asn99, Asn116, Asn139, Asn146, Asn209, Asn245, Asn249, Asn331, Asn406, Asn429, Asn462, and Asn470. Asp481 serves as the catalytic Nucleophile. Glu484 is an active-site residue. N-linked (GlcNAc...) asparagine glycans are attached at residues Asn520, Asn523, and Asn589. The active-site Proton donor is the Asp647. Residues Asn648, Asn801, Asn810, Asn821, Asn885, Asn915, Asn934, Asn942, Asn954, and Asn966 are each glycosylated (N-linked (GlcNAc...) asparagine).

It belongs to the glycosyl hydrolase 31 family.

It is found in the secreted. It catalyses the reaction Hydrolysis of terminal, non-reducing (1-&gt;4)-linked alpha-D-glucose residues with release of alpha-D-glucose.. Hydrolyzes malto-oligosaccharides, but has a low activity toward soluble starch. This is Alpha-glucosidase (agl1) from Schizosaccharomyces pombe (strain 972 / ATCC 24843) (Fission yeast).